A 925-amino-acid chain; its full sequence is Ectonucleotide pyrophosphatase/phosphodiesterase family member 1 (925 aa).

Positions 1–17 (MERDGCAGGGSRGGEGG) are enriched in gly residues. Residues 1-43 (MERDGCAGGGSRGGEGGRAPREGPAGNGRDRGRSHAAEAPGDP) are disordered. Topologically, residues 1–76 (MERDGCAGGG…RTAKDPNTYK (76 aa)) are cytoplasmic. The Di-leucine motif signature appears at 45–52 (AAASLLAP). A helical; Signal-anchor for type II membrane protein transmembrane segment spans residues 77–97 (VLSLVLSVCVLTTILGCIFGL). Residues 98 to 925 (KPSCAKEVKS…THLPTFSQED (828 aa)) lie on the Extracellular side of the membrane. 2 SMB domains span residues 104 to 144 (EVKS…IEPE) and 145 to 189 (HIWT…GEKS). Cystine bridges form between Cys-108–Cys-122, Cys-112–Cys-140, Cys-120–Cys-133, Cys-126–Cys-132, Cys-149–Cys-166, Cys-154–Cys-184, Cys-164–Cys-177, Cys-170–Cys-176, Cys-195–Cys-241, and Cys-203–Cys-415. Asn-179 is a glycosylation site (N-linked (GlcNAc...) asparagine). Residues 191–591 (VEEPCESINE…APNNGTHGSL (401 aa)) are phosphodiesterase. 3 residues coordinate AMP: Asp-218, Thr-256, and Asn-277. Zn(2+) contacts are provided by Asp-218 and Thr-256. Thr-256 functions as the AMP-threonine intermediate in the catalytic mechanism. The CMP site is built by Thr-256 and Asn-277. DTMP-binding residues include Thr-256 and Asn-277. GMP-binding residues include Thr-256 and Asn-277. Thr-256 is subject to Phosphothreonine. Residue Asn-285 is glycosylated (N-linked (GlcNAc...) asparagine). Residues Leu-290, Lys-295, and Tyr-340 each contribute to the GMP site. AMP contacts are provided by Lys-295 and Tyr-340. CMP-binding residues include Lys-295 and Tyr-340. Tyr-340 lines the dTMP pocket. Residue Asn-341 is glycosylated (N-linked (GlcNAc...) asparagine). Asp-376 contacts AMP. Positions 376, 380, 423, and 424 each coordinate Zn(2+). Residue Asp-376 coordinates CMP. Residue Asp-376 coordinates dTMP. Asp-376 lines the GMP pocket. His-380 lines the 2',3'-cGAMP pocket. His-424 provides a ligand contact to AMP. His-424 is a CMP binding site. His-424 is a dTMP binding site. His-424 contacts GMP. Intrachain disulfides connect Cys-431–Cys-530, Cys-480–Cys-868, Cys-614–Cys-672, Cys-626–Cys-726, Cys-628–Cys-711, and Cys-838–Cys-848. Asn-477 carries an N-linked (GlcNAc...) asparagine glycan. Residue Ser-532 coordinates 2',3'-cGAMP. Residue His-535 coordinates AMP. His-535 provides a ligand contact to Zn(2+). His-535 contributes to the CMP binding site. His-535 lines the dTMP pocket. His-535 is a binding site for GMP. N-linked (GlcNAc...) asparagine glycosylation is found at Asn-585, Asn-643, Asn-700, Asn-731, and Asn-748. The interval 597 to 647 (NPVYTPKHPKEVHPLVQCPFTRNPRDNLGCSCNPSILPIEDFQTQFNLTVA) is linker. Residues 654 to 925 (HETLPYGRPR…THLPTFSQED (272 aa)) form a nuclease-like domain region. Residues Asp-800, Asp-802, Asp-804, Arg-806, and Asp-808 each coordinate Ca(2+).

Belongs to the nucleotide pyrophosphatase/phosphodiesterase family. Homodimer. Interacts with INSR; leading to inhibit INSR autophosphorylation and subsequent activation of INSR kinase activity. As to quaternary structure, monomeric. Zn(2+) serves as cofactor. In terms of processing, autophosphorylated as part of the catalytic cycle of phosphodiesterase/pyrophosphatase activity. N-glycosylated. Post-translationally, the secreted form is produced through cleavage at Lys-103 by intracellular processing. Expressed in plasma cells and also in a number of non-lymphoid tissues, including the distal convoluted tubule of the kidney, chondrocytes and epididymis. Expressed in melanocytes but not in keratinocytes.

It is found in the cell membrane. It localises to the basolateral cell membrane. The protein localises to the secreted. It carries out the reaction Hydrolytically removes 5'-nucleotides successively from the 3'-hydroxy termini of 3'-hydroxy-terminated oligonucleotides.. The catalysed reaction is a ribonucleoside 5'-triphosphate + H2O = a ribonucleoside 5'-phosphate + diphosphate + H(+). It catalyses the reaction ATP + H2O = AMP + diphosphate + H(+). The enzyme catalyses UTP + H2O = UMP + diphosphate + H(+). It carries out the reaction GTP + H2O = GMP + diphosphate + H(+). The catalysed reaction is CTP + H2O = CMP + diphosphate + H(+). It catalyses the reaction 2',3'-cGAMP + 2 H2O = GMP + AMP + 2 H(+). The enzyme catalyses P(1),P(4)-bis(5'-adenosyl) tetraphosphate + H2O = AMP + ATP + 2 H(+). It carries out the reaction 3',5'-cyclic AMP + H2O = AMP + H(+). With respect to regulation, at low concentrations of ATP, a phosphorylated intermediate is formed which inhibits further hydrolysis. Nucleotide pyrophosphatase that generates diphosphate (PPi) and functions in bone mineralization and soft tissue calcification by regulating pyrophosphate levels. PPi inhibits bone mineralization and soft tissue calcification by binding to nascent hydroxyapatite crystals, thereby preventing further growth of these crystals. Preferentially hydrolyzes ATP, but can also hydrolyze other nucleoside 5' triphosphates such as GTP, CTP and UTP to their corresponding monophosphates with release of pyrophosphate, as well as diadenosine polyphosphates, and also 3',5'-cAMP to AMP. May also be involved in the regulation of the availability of nucleotide sugars in the endoplasmic reticulum and Golgi, and the regulation of purinergic signaling. Inhibits ectopic joint calcification and maintains articular chondrocytes by repressing hedgehog signaling; it is however unclear whether hedgehog inhibition is direct or indirect. Appears to modulate insulin sensitivity and function. Also involved in melanogenesis. Also able to hydrolyze 2',3'-cGAMP (cyclic GMP-AMP), a second messenger that activates TMEM173/STING and triggers type-I interferon production. 2',3'-cGAMP degradation takes place in the lumen or extracellular space, and not in the cytosol where it is produced; the role of 2',3'-cGAMP hydrolysis is therefore unclear. Not able to hydrolyze the 2',3'-cGAMP linkage isomer 3'-3'-cGAMP. This Homo sapiens (Human) protein is Ectonucleotide pyrophosphatase/phosphodiesterase family member 1.